Consider the following 1121-residue polypeptide: MAAATVGRDTLPEHWSYGVCRDGRVFFINDQLRCTTWLHPRTGEPVNSGHMIRSDLPRGWEEGFTEEGASYFIDHNQQTTAFRHPVTGQFSPENSEFILQEEPNPHMSKQDRNQRPSSMVSETSTAGTASTLEAKPGPKIIKSSSKVHSFGKRDQAIRRNPNVPVVVRGWLHKQDSSGMRLWKRRWFVLADYCLFYYKDSREEAVLGSIPLPSYVISPVAPEDRISRKYSFKAVHTGMRALIYNSSTAGSQAEQSGMRTYYFSADTQEDMNAWVRAMNQAAQVLSRSSLKRDMEKVERQAVPQANHTESCHECGRVGPGHTRDCPHRGHDDIVNFERQEQEGEQYRSQRDPLEGKRDRSKARSPYSPAEEDALFMDLPTGPRGQQAQPQRAEKNGMLPASYGPGEQNGTGGYQRAFPPRTNPEKHSQRKSNLAQVEHWARAQKGDSRSLPLDQTLPRQGPGQSLSFPENYQTLPKSTRHPSGGSSPPPRNLPSDYKYAQDRASHLKMSSEERRAHRDGTVWQLYEWQQRQQFRHGSPTAPICLGSPEFTDQGRSRSMLEVPRSISVPPSPSDIPPPGPPRVFPPRRPHTPAERVTVKPPDQRRSVDISLGDSPRRARGHAVKNSSHVDRRSMPSMGYMTHTVSAPSLHGKSADDTYLQLKKDLEYLDLKMTGRDLLKDRSLKPVKIAESDTDVKLSIFCEQDRVLQDLEDKIRALKENKDQLESVLEVLHRQMEQYRDQPQHLEKIAYQQKLLQEDLVHIRAELSRESTEMENAWNEYLKLENDVEQLKQTLQEQHRRAFFFQEKSQIQKDLWRIEDVTAGLSANKENFRILVESVKNPERKTVPLFPHPPVPSLSTSESKPPPQPSPPTSPVRTPLEVRLFPQLQTYVPYRPHPPQLRKVTSPLQSPTKAKPKVEDEAPPRPPLPELYSPEDQPPAVPPLPREATIIRHTSVRGLKRQSDERKRDRELGQCVNGDSRVELRSYVSEPELATLSGDMAQPSLGLVGPESRYQTLPGRGLSGSTSRLQQSSTIAPYVTLRRGLNAESSKATFPRPKSALERLYSGDHQRGKMSAEEQLERMKRHQKALVRERKRTLGQGERTGLPSSRYLSRPLPGDLGSVC.

2 consecutive WW domains span residues 9-42 (DTLP…HPRT) and 54-87 (SDLP…HPVT). A disordered region spans residues 105 to 137 (PHMSKQDRNQRPSSMVSETSTAGTASTLEAKPG). The segment covering 115–131 (RPSSMVSETSTAGTAST) has biased composition (polar residues). In terms of domain architecture, PH spans 164-282 (PVVVRGWLHK…WVRAMNQAAQ (119 aa)). The tract at residues 299–514 (QAVPQANHTE…LKMSSEERRA (216 aa)) is disordered. Composition is skewed to basic and acidic residues over residues 308–356 (ESCH…EGKR) and 437–446 (HWARAQKGDS). The segment covering 460-475 (PGQSLSFPENYQTLPK) has biased composition (polar residues). The span at 497 to 514 (YAQDRASHLKMSSEERRA) shows a compositional bias: basic and acidic residues. Residues Ser536, Ser545, Ser569, Ser604, Ser608, and Ser612 each carry the phosphoserine modification. An interaction with CTNND1 region spans residues 538–696 (TAPICLGSPE…AESDTDVKLS (159 aa)). The interval 547-632 (EFTDQGRSRS…NSSHVDRRSM (86 aa)) is disordered. The span at 567–582 (PPSPSDIPPPGPPRVF) shows a compositional bias: pro residues. Basic and acidic residues predominate over residues 589 to 605 (TPAERVTVKPPDQRRSV). A coiled-coil region spans residues 700–801 (EQDRVLQDLE…LQEQHRRAFF (102 aa)). Disordered stretches follow at residues 841–876 (RKTV…VRTP) and 888–971 (YVPY…ELGQ). Ser858, Ser860, and Ser867 each carry phosphoserine. Over residues 861–871 (KPPPQPSPPTS) the composition is skewed to pro residues. Phosphothreonine is present on Thr870. Phosphoserine occurs at positions 871, 903, and 907. Positions 933–942 (DQPPAVPPLP) are enriched in pro residues. Residues 958–969 (RQSDERKRDREL) are compositionally biased toward basic and acidic residues. Ser986 is subject to Phosphoserine. 2 disordered regions span residues 1003-1028 (GLVG…RLQQ) and 1082-1121 (RHQK…GSVC). Residues 1067 to 1094 (QRGKMSAEEQLERMKRHQKALVRERKRT) are a coiled coil. A compositionally biased stretch (basic residues) spans 1082–1094 (RHQKALVRERKRT).

As to quaternary structure, interacts with CAMSAP3 and CTNND1. Interacts (via WW domains) with TSPAN33 (via cytoplasmic domain) and with PDZD11; the interaction with TSPAN33 is dependent on PDZD11 being bound to PLEKHA7 and facilitates the docking of ADAM10 to zonula adherens through interaction of TSPAN33 with ADAM10.

The protein resides in the cell junction. It localises to the adherens junction. Its subcellular location is the cytoplasm. The protein localises to the cytoskeleton. It is found in the microtubule organizing center. The protein resides in the centrosome. Required for zonula adherens biogenesis and maintenance. Acts via its interaction with CAMSAP3, which anchors microtubules at their minus-ends to zonula adherens, leading to the recruitment of KIFC3 kinesin to the junctional site. Mediates docking of ADAM10 to zonula adherens through a PDZD11-dependent interaction with the ADAM10-binding protein TSPAN33. In Homo sapiens (Human), this protein is Pleckstrin homology domain-containing family A member 7 (PLEKHA7).